Here is a 190-residue protein sequence, read N- to C-terminus: Probable nicotinate-nucleotide adenylyltransferase (190 aa).

This sequence belongs to the NadD family.

It carries out the reaction nicotinate beta-D-ribonucleotide + ATP + H(+) = deamido-NAD(+) + diphosphate. It functions in the pathway cofactor biosynthesis; NAD(+) biosynthesis; deamido-NAD(+) from nicotinate D-ribonucleotide: step 1/1. Its function is as follows. Catalyzes the reversible adenylation of nicotinate mononucleotide (NaMN) to nicotinic acid adenine dinucleotide (NaAD). This chain is Probable nicotinate-nucleotide adenylyltransferase, found in Borrelia turicatae (strain 91E135).